A 586-amino-acid chain; its full sequence is Phosphoenolpyruvate-protein phosphotransferase (586 aa).

Histidine 201 acts as the Tele-phosphohistidine intermediate in catalysis. 2 residues coordinate phosphoenolpyruvate: arginine 308 and arginine 345. Mg(2+)-binding residues include glutamate 446 and aspartate 470. Residues 469–470 (ND) and arginine 480 each bind phosphoenolpyruvate. The active-site Proton donor is cysteine 517.

This sequence belongs to the PEP-utilizing enzyme family. In terms of assembly, homodimer. It depends on Mg(2+) as a cofactor.

Its subcellular location is the cytoplasm. It catalyses the reaction L-histidyl-[protein] + phosphoenolpyruvate = N(pros)-phospho-L-histidyl-[protein] + pyruvate. General (non sugar-specific) component of the phosphoenolpyruvate-dependent sugar phosphotransferase system (sugar PTS). This major carbohydrate active-transport system catalyzes the phosphorylation of incoming sugar substrates concomitantly with their translocation across the cell membrane. Enzyme I transfers the phosphoryl group from phosphoenolpyruvate (PEP) to the phosphoryl carrier protein (HPr). The chain is Phosphoenolpyruvate-protein phosphotransferase from Cupriavidus necator (strain ATCC 17699 / DSM 428 / KCTC 22496 / NCIMB 10442 / H16 / Stanier 337) (Ralstonia eutropha).